The sequence spans 200 residues: uncharacterized protein (200 aa).

The first 24 residues, 1 to 24 (MAIDKLPLLLFLSILLCLNRPVLS), serve as a signal peptide directing secretion. N44, N72, N99, N124, and N135 each carry an N-linked (GlcNAc...) asparagine glycan. S174 carries GPI-anchor amidated serine lipidation. Positions 175–200 (NGFTFGIGLVSYLVIFMYSSFCFFLF) are cleaved as a propeptide — removed in mature form.

It belongs to the UPF0277 family.

It is found in the cell membrane. This is an uncharacterized protein from Arabidopsis thaliana (Mouse-ear cress).